Here is a 301-residue protein sequence, read N- to C-terminus: MKIGVIMGGISSEREISLQSGKSIIENINKEKYEVLPIVIDKKEDIINKSKGIDFALLALHGQFGEDGTVQSVLQTLGIPYSGCGPLSSAMCMDKDVSKSVLEANGIRTAPWINLRKGDNIDFNKINELGYPVVVKPTHGGSSVATFIVKEEKEIENCVSEAFKWDSEVMIEKFIKGDEITCPVYNNKMLPVIAIKPKAEFFDFTSKYQDGGAEEIVVELEAELHKEVEKMALETYKALKCEVYSRVDMIVTEEGVPYILEINTLPGMTKNSLIPKSAAALNIGFSELIDMIIQDSLKISR.

The ATP-grasp domain occupies Lys-99–Gln-294. ATP is bound at residue Ile-126–Thr-181. Mg(2+) is bound by residues Asp-248, Glu-261, and Asn-263.

This sequence belongs to the D-alanine--D-alanine ligase family. Mg(2+) is required as a cofactor. Requires Mn(2+) as cofactor.

It localises to the cytoplasm. The catalysed reaction is 2 D-alanine + ATP = D-alanyl-D-alanine + ADP + phosphate + H(+). It functions in the pathway cell wall biogenesis; peptidoglycan biosynthesis. Functionally, cell wall formation. This is D-alanine--D-alanine ligase from Clostridium beijerinckii (strain ATCC 51743 / NCIMB 8052) (Clostridium acetobutylicum).